Reading from the N-terminus, the 222-residue chain is tRNA (guanine-N(1)-)-methyltransferase (222 aa).

S-adenosyl-L-methionine-binding positions include Gly-111 and 131–136; that span reads LGNYVI.

Belongs to the RNA methyltransferase TrmD family. As to quaternary structure, homodimer.

The protein localises to the cytoplasm. It carries out the reaction guanosine(37) in tRNA + S-adenosyl-L-methionine = N(1)-methylguanosine(37) in tRNA + S-adenosyl-L-homocysteine + H(+). Specifically methylates guanosine-37 in various tRNAs. This Leptospira borgpetersenii serovar Hardjo-bovis (strain JB197) protein is tRNA (guanine-N(1)-)-methyltransferase.